A 238-amino-acid polypeptide reads, in one-letter code: Fatty acid metabolism regulator protein (238 aa).

The HTH gntR-type domain maps to K6–F74. The segment at residues E34 to Q53 is a DNA-binding region (H-T-H motif).

In terms of assembly, homodimer.

It is found in the cytoplasm. Multifunctional regulator of fatty acid metabolism. In Shewanella putrefaciens (strain CN-32 / ATCC BAA-453), this protein is Fatty acid metabolism regulator protein.